Here is a 407-residue protein sequence, read N- to C-terminus: Large ribosomal subunit protein uL3-like (407 aa).

Residues Met-1–Ser-31 are compositionally biased toward basic residues. The interval Met-1–Pro-37 is disordered.

It belongs to the universal ribosomal protein uL3 family. Component of the large ribosomal subunit (LSU). Part of a LSU subcomplex, the 5S RNP which is composed of the 5S RNA, RPL5 and RPL11. Interacts with NVL in an ATP-dependent manner. Interacts with RRP1B. Interacts with IPO5, IPO7 and KPNB1; these interactions may be involved in RPL5 nuclear import for the assembly of ribosomal subunits. Interacts with RRP1B. In terms of tissue distribution, expression is restricted to striated muscles.

Functionally, heart- and skeletal muscle-specific component of the ribosome, which regulates muscle function. Component of the large ribosomal subunit in striated muscle cells: replaces the RPL3 paralog in the ribosome in these cells. The ribosome is a large ribonucleoprotein complex responsible for the synthesis of proteins in the cell. Inhibits myotube growth and muscle function. The polypeptide is Large ribosomal subunit protein uL3-like (Mus musculus (Mouse)).